A 102-amino-acid polypeptide reads, in one-letter code: ATP-dependent Clp protease adapter protein ClpS (102 aa).

The protein belongs to the ClpS family. Binds to the N-terminal domain of the chaperone ClpA.

Functionally, involved in the modulation of the specificity of the ClpAP-mediated ATP-dependent protein degradation. This Dechloromonas aromatica (strain RCB) protein is ATP-dependent Clp protease adapter protein ClpS.